A 134-amino-acid polypeptide reads, in one-letter code: Probable glycine cleavage system H protein (134 aa).

One can recognise a Lipoyl-binding domain in the interval 29–110; that stretch reads TVLVGITDYA…PYGAWIAKIK (82 aa). The residue at position 70 (K70) is an N6-lipoyllysine.

The protein belongs to the GcvH family. The glycine cleavage system is composed of four proteins: P, T, L and H. (R)-lipoate serves as cofactor.

Its function is as follows. The glycine cleavage system catalyzes the degradation of glycine. The H protein shuttles the methylamine group of glycine from the P protein to the T protein. The chain is Probable glycine cleavage system H protein from Pyrococcus abyssi (strain GE5 / Orsay).